The chain runs to 268 residues: MPLSVNPPLFIPFIVAGDPAPDVTIDLALALEEAGADILELGVPYSDPLADGPTIQRAAARALDGGMTLPKAIQLIGEMRKKGVNIPIILFTYYNPVLQLGEESFFALARENGADGVLIPDLPFEESGPLRELGERFGLPLISLVAPTSKQRIERIASAAQGFLYCVSSLGVTGVRETLPETLGDFLREVKRHSRVPVAVGFGISAPEQVAMLKEVCDGVVVGSALVQKVEQLAPRLQTPDEREAAVAEFAAYARSLAAPLREAYSSR.

Residues E40 and D51 each act as proton acceptor in the active site.

This sequence belongs to the TrpA family. In terms of assembly, tetramer of two alpha and two beta chains.

It catalyses the reaction (1S,2R)-1-C-(indol-3-yl)glycerol 3-phosphate + L-serine = D-glyceraldehyde 3-phosphate + L-tryptophan + H2O. It functions in the pathway amino-acid biosynthesis; L-tryptophan biosynthesis; L-tryptophan from chorismate: step 5/5. Functionally, the alpha subunit is responsible for the aldol cleavage of indoleglycerol phosphate to indole and glyceraldehyde 3-phosphate. The sequence is that of Tryptophan synthase alpha chain from Geobacillus kaustophilus (strain HTA426).